Here is a 341-residue protein sequence, read N- to C-terminus: Methionine import ATP-binding protein MetN (341 aa).

The ABC transporter domain maps to 2–241 (IELNQVVKRY…PQHEVTRRFV (240 aa)). Residue 38–45 (GFSGAGKS) participates in ATP binding.

Belongs to the ABC transporter superfamily. Methionine importer (TC 3.A.1.24) family. The complex is composed of two ATP-binding proteins (MetN), two transmembrane proteins (MetI) and a solute-binding protein (MetQ).

The protein localises to the cell membrane. The catalysed reaction is L-methionine(out) + ATP + H2O = L-methionine(in) + ADP + phosphate + H(+). It catalyses the reaction D-methionine(out) + ATP + H2O = D-methionine(in) + ADP + phosphate + H(+). In terms of biological role, part of the ABC transporter complex MetNIQ involved in methionine import. Responsible for energy coupling to the transport system. In Staphylococcus haemolyticus (strain JCSC1435), this protein is Methionine import ATP-binding protein MetN.